Here is a 150-residue protein sequence, read N- to C-terminus: D-aminoacyl-tRNA deacylase (150 aa).

The Gly-cisPro motif, important for rejection of L-amino acids signature appears at Gly-138–Pro-139.

This sequence belongs to the DTD family. Homodimer.

The protein localises to the cytoplasm. It carries out the reaction glycyl-tRNA(Ala) + H2O = tRNA(Ala) + glycine + H(+). It catalyses the reaction a D-aminoacyl-tRNA + H2O = a tRNA + a D-alpha-amino acid + H(+). Its function is as follows. An aminoacyl-tRNA editing enzyme that deacylates mischarged D-aminoacyl-tRNAs. Also deacylates mischarged glycyl-tRNA(Ala), protecting cells against glycine mischarging by AlaRS. Acts via tRNA-based rather than protein-based catalysis; rejects L-amino acids rather than detecting D-amino acids in the active site. By recycling D-aminoacyl-tRNA to D-amino acids and free tRNA molecules, this enzyme counteracts the toxicity associated with the formation of D-aminoacyl-tRNA entities in vivo and helps enforce protein L-homochirality. The sequence is that of D-aminoacyl-tRNA deacylase from Christiangramia forsetii (strain DSM 17595 / CGMCC 1.15422 / KT0803) (Gramella forsetii).